Here is a 471-residue protein sequence, read N- to C-terminus: Chromosomal replication initiator protein DnaA (471 aa).

The domain I, interacts with DnaA modulators stretch occupies residues 1–77 (MELNSSFWTL…YTEISDTYGK (77 aa)). Residues 77–130 (KPFEVEFSITGNKINSHIETSTTPDEVLSGSEILQAQLARAQNIQPTQPRSSSD) are domain II. Residues 131-349 (TLNSELTFST…GNLKKVKMFS (219 aa)) form a domain III, AAA+ region region. ATP-binding residues include Gly176, Gly178, Lys179, and Thr180. Positions 350-471 (ELQGLPIDHE…EQRIHNITRV (122 aa)) are domain IV, binds dsDNA.

Belongs to the DnaA family. Oligomerizes as a right-handed, spiral filament on DNA at oriC.

The protein localises to the cytoplasm. In terms of biological role, plays an essential role in the initiation and regulation of chromosomal replication. ATP-DnaA binds to the origin of replication (oriC) to initiate formation of the DNA replication initiation complex once per cell cycle. Binds the DnaA box (a 9 base pair repeat at the origin) and separates the double-stranded (ds)DNA. Forms a right-handed helical filament on oriC DNA; dsDNA binds to the exterior of the filament while single-stranded (ss)DNA is stabiized in the filament's interior. The ATP-DnaA-oriC complex binds and stabilizes one strand of the AT-rich DNA unwinding element (DUE), permitting loading of DNA polymerase. After initiation quickly degrades to an ADP-DnaA complex that is not apt for DNA replication. Binds acidic phospholipids. The chain is Chromosomal replication initiator protein DnaA from Bdellovibrio bacteriovorus (strain ATCC 15356 / DSM 50701 / NCIMB 9529 / HD100).